The primary structure comprises 703 residues: ABC transporter G family member 11 (703 aa).

In terms of domain architecture, ABC transporter spans 50 to 293; the sequence is LTWQDLTVMV…FAQAGFPCPA (244 aa). 87–94 is a binding site for ATP; it reads GPSGSGKS. An ABC transmembrane type-2 domain is found at 382-594; sequence LQTYTLTKRS…ALQGQYQNDL (213 aa). Asn-394 carries N-linked (GlcNAc...) asparagine glycosylation. 6 helical membrane passes run 406–426, 436–456, 485–505, 513–533, 540–560, and 628–648; these read LLIY…VGTS, CASF…PSFV, TPFL…MVGL, LFFV…MMAI, FLMG…VSGF, and INLS…FIMI. Residues Asn-671 and Asn-675 are each glycosylated (N-linked (GlcNAc...) asparagine). Ser-688 is modified (phosphoserine).

The protein belongs to the ABC transporter superfamily. ABCG family. Eye pigment precursor importer (TC 3.A.1.204) subfamily. Homodimer. Forms heterodimers with ABCG9, ABCG12 and ABCG14 in epidermal cells. In terms of tissue distribution, expressed in seedlings, roots, stems, leaves, flowers, and siliques, mostly in epidermis, trichomes, vasculatures and developing tissues. Follows an uniparental maternal expression in the seed, thus being the product of a maternally expressed imprinted gene. Accumulates in the phloem. Transcripts seem to be transported from shoots to roots.

It localises to the cell membrane. Required for the cuticle, root suberin and pollen coat development by controlling cutin and maybe wax transport to the extracellular matrix. Involved in developmental plasticity and stress responses. Together with ABCG9 and ABCG14, required for vascular development by regulating lipid/sterol homeostasis. May be a transporter of lignin precursors during tracheary element differentiation. This is ABC transporter G family member 11 from Arabidopsis thaliana (Mouse-ear cress).